Consider the following 242-residue polypeptide: Cysteine-rich venom protein VAR11 (242 aa).

The signal sequence occupies residues 1–19 (MILLKLYLTLAAILCQSRG). In terms of domain architecture, SCP spans 41–169 (NKHNDLRRTV…SLKYFQVCQY (129 aa)). Cystine bridges form between Cys-77/Cys-156, Cys-95/Cys-170, Cys-151/Cys-167, Cys-189/Cys-196, Cys-192/Cys-201, Cys-205/Cys-237, Cys-214/Cys-231, and Cys-223/Cys-235. In terms of domain architecture, ShKT spans 205–237 (CAYNDDYTSCPDLTKQVGCNHPVTANCKASCQC).

It belongs to the CRISP family. As to expression, expressed by the venom gland.

The protein resides in the secreted. In terms of biological role, blocks ryanodine receptors, and potassium channels. This is Cysteine-rich venom protein VAR11 from Varanus varius (Lace monitor lizard).